The primary structure comprises 123 residues: Small ribosomal subunit protein uS12 (123 aa).

Positions 1 to 21 (MPTIEQLVRKGRQAKPKKSKT) are disordered. The span at 9 to 20 (RKGRQAKPKKSK) shows a compositional bias: basic residues. The residue at position 89 (Asp89) is a 3-methylthioaspartic acid.

Belongs to the universal ribosomal protein uS12 family. In terms of assembly, part of the 30S ribosomal subunit. Contacts proteins S8 and S17. May interact with IF1 in the 30S initiation complex.

Its function is as follows. With S4 and S5 plays an important role in translational accuracy. Functionally, interacts with and stabilizes bases of the 16S rRNA that are involved in tRNA selection in the A site and with the mRNA backbone. Located at the interface of the 30S and 50S subunits, it traverses the body of the 30S subunit contacting proteins on the other side and probably holding the rRNA structure together. The combined cluster of proteins S8, S12 and S17 appears to hold together the shoulder and platform of the 30S subunit. The polypeptide is Small ribosomal subunit protein uS12 (Bifidobacterium adolescentis (strain ATCC 15703 / DSM 20083 / NCTC 11814 / E194a)).